Consider the following 425-residue polypeptide: Glutamyl-tRNA reductase (425 aa).

Residues 49 to 52 (TCNR), serine 107, 112 to 114 (EPQ), and glutamine 118 contribute to the substrate site. Residue cysteine 50 is the Nucleophile of the active site. 187-192 (GAGETI) contacts NADP(+).

The protein belongs to the glutamyl-tRNA reductase family. Homodimer.

It catalyses the reaction (S)-4-amino-5-oxopentanoate + tRNA(Glu) + NADP(+) = L-glutamyl-tRNA(Glu) + NADPH + H(+). It participates in porphyrin-containing compound metabolism; protoporphyrin-IX biosynthesis; 5-aminolevulinate from L-glutamyl-tRNA(Glu): step 1/2. Functionally, catalyzes the NADPH-dependent reduction of glutamyl-tRNA(Glu) to glutamate 1-semialdehyde (GSA). The polypeptide is Glutamyl-tRNA reductase (Pseudomonas entomophila (strain L48)).